A 148-amino-acid polypeptide reads, in one-letter code: Proline-rich protein 13 (148 aa).

Residues 1-148 (MWNPNAGQPG…SSSSSSSDSD (148 aa)) are disordered. 2 stretches are compositionally biased toward pro residues: residues 27–67 (AHPP…PQPG) and 75–93 (GPYP…PVNP). A compositionally biased stretch (basic residues) spans 109-135 (MQKKMKKAHKKMHKHQKHHKYHKHGKH). The segment covering 136–148 (SSSSSSSSSSDSD) has biased composition (low complexity).

The protein resides in the nucleus. Functionally, negatively regulates TSP1 expression at the level of transcription. This down-regulation was shown to reduce taxane-induced apoptosis. This Homo sapiens (Human) protein is Proline-rich protein 13 (PRR13).